We begin with the raw amino-acid sequence, 188 residues long: Threonylcarbamoyl-AMP synthase (188 aa).

The YrdC-like domain maps to 3-188 (QLQPSAVATT…RSGQILRNGS (186 aa)).

It belongs to the SUA5 family. TsaC subfamily.

It is found in the cytoplasm. It carries out the reaction L-threonine + hydrogencarbonate + ATP = L-threonylcarbamoyladenylate + diphosphate + H2O. Its function is as follows. Required for the formation of a threonylcarbamoyl group on adenosine at position 37 (t(6)A37) in tRNAs that read codons beginning with adenine. Catalyzes the conversion of L-threonine, HCO(3)(-)/CO(2) and ATP to give threonylcarbamoyl-AMP (TC-AMP) as the acyladenylate intermediate, with the release of diphosphate. This chain is Threonylcarbamoyl-AMP synthase, found in Shewanella frigidimarina (strain NCIMB 400).